A 151-amino-acid polypeptide reads, in one-letter code: Deoxyuridine 5'-triphosphate nucleotidohydrolase (151 aa).

Substrate contacts are provided by residues 69-71 (RSG), asparagine 82, and 86-88 (TID).

This sequence belongs to the dUTPase family. Mg(2+) serves as cofactor.

It carries out the reaction dUTP + H2O = dUMP + diphosphate + H(+). It functions in the pathway pyrimidine metabolism; dUMP biosynthesis; dUMP from dCTP (dUTP route): step 2/2. Its function is as follows. This enzyme is involved in nucleotide metabolism: it produces dUMP, the immediate precursor of thymidine nucleotides and it decreases the intracellular concentration of dUTP so that uracil cannot be incorporated into DNA. This is Deoxyuridine 5'-triphosphate nucleotidohydrolase from Rhodospirillum centenum (strain ATCC 51521 / SW).